The chain runs to 315 residues: Ribosomal RNA small subunit methyltransferase H (315 aa).

S-adenosyl-L-methionine contacts are provided by residues 35–37 (GGH), D55, F80, D102, and Q109.

The protein belongs to the methyltransferase superfamily. RsmH family.

It localises to the cytoplasm. The enzyme catalyses cytidine(1402) in 16S rRNA + S-adenosyl-L-methionine = N(4)-methylcytidine(1402) in 16S rRNA + S-adenosyl-L-homocysteine + H(+). Functionally, specifically methylates the N4 position of cytidine in position 1402 (C1402) of 16S rRNA. The polypeptide is Ribosomal RNA small subunit methyltransferase H (Buchnera aphidicola subsp. Baizongia pistaciae (strain Bp)).